The chain runs to 102 residues: uncharacterized protein (102 aa).

Positions 1-43 (MNNAHEENISSVTGFKSTSGSPAIGSSLPGRSGEGRSSSSSSG) are disordered. Over residues 9 to 21 (ISSVTGFKSTSGS) the composition is skewed to polar residues. Over residues 25–43 (GSSLPGRSGEGRSSSSSSG) the composition is skewed to low complexity.

This is an uncharacterized protein from Saccharomyces cerevisiae (strain ATCC 204508 / S288c) (Baker's yeast).